We begin with the raw amino-acid sequence, 185 residues long: Peptidyl-tRNA hydrolase (185 aa).

Tyr14 contributes to the tRNA binding site. The active-site Proton acceptor is the His19. Residues Tyr65, Asn67, and Asn113 each contribute to the tRNA site.

The protein belongs to the PTH family. In terms of assembly, monomer.

The protein localises to the cytoplasm. The enzyme catalyses an N-acyl-L-alpha-aminoacyl-tRNA + H2O = an N-acyl-L-amino acid + a tRNA + H(+). Hydrolyzes ribosome-free peptidyl-tRNAs (with 1 or more amino acids incorporated), which drop off the ribosome during protein synthesis, or as a result of ribosome stalling. Its function is as follows. Catalyzes the release of premature peptidyl moieties from peptidyl-tRNA molecules trapped in stalled 50S ribosomal subunits, and thus maintains levels of free tRNAs and 50S ribosomes. The protein is Peptidyl-tRNA hydrolase of Rickettsia conorii (strain ATCC VR-613 / Malish 7).